Here is a 914-residue protein sequence, read N- to C-terminus: Ubiquitin carboxyl-terminal hydrolase 20 (914 aa).

The UBP-type zinc finger occupies 6 to 111 (DLCPHLDSIG…GSSSKFSEQD (106 aa)). Residues C8, H10, C30, C33, C43, C48, C53, H60, H64, H70, C83, and C86 each coordinate Zn(2+). Phosphoserine is present on residues S112, S132, and S134. The USP domain occupies 145-685 (TGMKNLGNSC…EGYVLFYRKS (541 aa)). The active-site Nucleophile is C154. Disordered stretches follow at residues 257 to 347 (LTEA…VDED) and 360 to 415 (QPAE…ASPV). Phosphothreonine is present on T258. Basic and acidic residues predominate over residues 259 to 279 (EARDSDSSDTDEKREGDRSPS). Residue S305 is modified to Phosphoserine. The span at 316–332 (EAGRAISEKERMKDRKF) shows a compositional bias: basic and acidic residues. Position 368 is a phosphoserine (S368). At T377 the chain carries Phosphothreonine. S408 and S413 each carry phosphoserine. Catalysis depends on H643, which acts as the Proton acceptor. 2 DUSP domains span residues 687–780 (EEAM…LYVC) and 789–892 (ALAK…RQSV).

This sequence belongs to the peptidase C19 family. USP20/USP33 subfamily. In terms of assembly, interacts with VHL, leading to its ubiquitination and subsequent degradation. Interacts with CCP110. Interacts with DIO2. Interacts with HIF1A. Interacts with ADRB2. Interacts with USP18. Ubiquitinated via a VHL-dependent pathway for proteasomal degradation.

Its subcellular location is the cytoplasm. It is found in the endoplasmic reticulum. The protein localises to the perinuclear region. The protein resides in the cytoskeleton. It localises to the microtubule organizing center. Its subcellular location is the centrosome. It catalyses the reaction Thiol-dependent hydrolysis of ester, thioester, amide, peptide and isopeptide bonds formed by the C-terminal Gly of ubiquitin (a 76-residue protein attached to proteins as an intracellular targeting signal).. Its function is as follows. Deubiquitinating enzyme that plays a role in many cellular processes including autophagy, cellular antiviral response or membrane protein biogenesis. Attenuates TLR4-mediated NF-kappa-B signaling by cooperating with beta-arrestin-2/ARRB2 and inhibiting TRAF6 autoubiquitination. Promotes cellular antiviral responses by deconjugating 'Lys-33' and 'Lys-48'-linked ubiquitination of STING1 leading to its stabilization. Plays an essential role in autophagy induction by regulating the ULK1 stability through deubiquitination of ULK1. Acts as a positive regulator for NF-kappa-B activation by TNF-alpha through deubiquitinating 'Lys-48'-linked polyubiquitination of SQSTM1, leading to its increased stability. Acts as a regulator of G-protein coupled receptor (GPCR) signaling by mediating the deubiquitination beta-2 adrenergic receptor (ADRB2). Plays a central role in ADRB2 recycling and resensitization after prolonged agonist stimulation by constitutively binding ADRB2, mediating deubiquitination of ADRB2 and inhibiting lysosomal trafficking of ADRB2. Upon dissociation, it is probably transferred to the translocated beta-arrestins, possibly leading to beta-arrestins deubiquitination and disengagement from ADRB2. This suggests the existence of a dynamic exchange between the ADRB2 and beta-arrestins. Deubiquitinates DIO2, thereby regulating thyroid hormone regulation. Deubiquitinates HIF1A, leading to stabilize HIF1A and enhance HIF1A-mediated activity. Deubiquitinates MCL1, a pivotal member of the anti-apoptotic Bcl-2 protein family to regulate its stability. Within the endoplasmic reticulum, participates with USP33 in the rescue of post-translationally targeted membrane proteins that are inappropriately ubiquitinated by the cytosolic protein quality control in the cytosol. The sequence is that of Ubiquitin carboxyl-terminal hydrolase 20 (USP20) from Homo sapiens (Human).